The sequence spans 222 residues: uncharacterized protein (222 aa).

Residues 7 to 26 traverse the membrane as a helical segment; it reads ICLVSLICISGIYFGYQYYQ. Residues 139 to 222 form the SPOR domain; it reads CRSNAGYKVQ…AYNKQSCVLK (84 aa).

It is found in the membrane. This is an uncharacterized protein from Rickettsia prowazekii (strain Madrid E).